The chain runs to 711 residues: MGDERPHYYGKHGTPQKYDPTFKGPIYNRGCTDVICCVFLLVAIVGYVAVGIIAWTHGDPRKVIYPTDSRGEFCGQEGTKNENKPYLFYFNIVKCASPLVLLEFQCPTPQICVEKCPNRYLTYLNARSSRDFEYYKQFCVPGFKNNKGVAEVLRDGDCPAVLIPSKPLVRRCFPAIHAYKGVLMVGNETTYEDGHGARKNITDLVEGAKKANGVLEARQLAMRIFEDYTVSWYWIIIGLVIAMAMSLLFIILLRFLAGIMVWVMIIMVILVLGYGIFHCYMEYSRLRGEAGSDVSLVDLGFQTDFRVYLHLRQTWLAFMIILSILEVIIILLLIFLRKRILIAIALIKEASRAVGYVMCTMLYPLVTFFLLCLCIAYWASTAVFLSTSNEAVYKIFDDGLCPFTAKTCNPETFPSSNESRQCPNARCQFAFYGGESGYHRALLGLQIFNAFMFFWLANFVLALGQVTLAGAFASYYWALRKPDDLPAFPLFSAFGRALRYHTGSLAFGALILAIVQIIRVILEYLDQRLKAAENKFAKCLMTCLKCCFWCLEKFIKFLNRNAYIMIAIYGTNFCTSARNAFFLLMRNIIRVAVLDKVTDFLFLLGKLLIVGSVGILAFFFFTHRIRIVQDTAPPLNYYWVPILTVIVGSYLIAHGFFSVYGMCVDTLFLCFCEDLERNDGSQERPYFMSPELRDILLKGSAEEGKRAEAEE.

Residues 1 to 33 (MGDERPHYYGKHGTPQKYDPTFKGPIYNRGCTD) are Cytoplasmic-facing. Thr-14 is modified (phosphothreonine). Residues 34–54 (VICCVFLLVAIVGYVAVGIIA) form a helical membrane-spanning segment. Topologically, residues 55–232 (WTHGDPRKVI…RIFEDYTVSW (178 aa)) are extracellular. N-linked (GlcNAc...) asparagine glycosylation is found at Asn-187 and Asn-200. Residues 233–253 (YWIIIGLVIAMAMSLLFIILL) traverse the membrane as a helical segment. At 254 to 256 (RFL) the chain is on the cytoplasmic side. Residues 257–277 (AGIMVWVMIIMVILVLGYGIF) traverse the membrane as a helical segment. The Extracellular segment spans residues 278-315 (HCYMEYSRLRGEAGSDVSLVDLGFQTDFRVYLHLRQTW). The chain crosses the membrane as a helical span at residues 316–336 (LAFMIILSILEVIIILLLIFL). The Cytoplasmic portion of the chain corresponds to 337–364 (RKRILIAIALIKEASRAVGYVMCTMLYP). A helical membrane pass occupies residues 365 to 385 (LVTFFLLCLCIAYWASTAVFL). Residues 386-440 (STSNEAVYKIFDDGLCPFTAKTCNPETFPSSNESRQCPNARCQFAFYGGESGYHR) are Extracellular-facing. The N-linked (GlcNAc...) asparagine glycan is linked to Asn-417. The helical transmembrane segment at 441 to 461 (ALLGLQIFNAFMFFWLANFVL) threads the bilayer. The Cytoplasmic portion of the chain corresponds to 462-504 (ALGQVTLAGAFASYYWALRKPDDLPAFPLFSAFGRALRYHTGS). A helical membrane pass occupies residues 505-525 (LAFGALILAIVQIIRVILEYL). The Extracellular portion of the chain corresponds to 526–563 (DQRLKAAENKFAKCLMTCLKCCFWCLEKFIKFLNRNAY). Residues 564 to 584 (IMIAIYGTNFCTSARNAFFLL) traverse the membrane as a helical segment. The Cytoplasmic segment spans residues 585-599 (MRNIIRVAVLDKVTD). Residues 600–620 (FLFLLGKLLIVGSVGILAFFF) traverse the membrane as a helical segment. Residues 621–638 (FTHRIRIVQDTAPPLNYY) lie on the Extracellular side of the membrane. The chain crosses the membrane as a helical span at residues 639-659 (WVPILTVIVGSYLIAHGFFSV). At 660–711 (YGMCVDTLFLCFCEDLERNDGSQERPYFMSPELRDILLKGSAEEGKRAEAEE) the chain is on the cytoplasmic side.

Belongs to the CTL (choline transporter-like) family. In terms of assembly, interacts with COCH. Post-translationally, N-glycosylated.

The protein resides in the cell membrane. It is found in the mitochondrion outer membrane. The enzyme catalyses choline(out) + n H(+)(in) = choline(in) + n H(+)(out). It catalyses the reaction ethanolamine(out) + n H(+)(in) = ethanolamine(in) + n H(+)(out). Its function is as follows. Choline/H+ antiporter, mainly in mitochodria. Also acts as a low-affinity ethanolamine/H+ antiporter, regulating the supply of extracellular ethanolamine (Etn) for the CDP-Etn pathway, redistribute intracellular Etn and balance the CDP-Cho and CDP-Etn arms of the Kennedy pathway. The protein is Choline transporter-like protein 2 (SLC44A2) of Pongo abelii (Sumatran orangutan).